Reading from the N-terminus, the 254-residue chain is Major prion protein (254 aa).

The N-terminal stretch at 1–22 (MANLSYWLLALFVATWTDVGLC) is a signal peptide. Residues 23–231 (KKRPKPGGWN…SQAYYDGRRS (209 aa)) form an interaction with GRB2, ERI3 and SYN1 region. Residues 25 to 104 (RPKPGGWNTG…THNQWNKPSK (80 aa)) are disordered. Repeat copies occupy residues 51–59 (PQGGGTWGQ), 60–67 (PHGGGWGQ), 68–75 (PHGGGWGQ), 76–83 (PHGGGWGQ), and 84–91 (PHGGGWGQ). Residues 51–91 (PQGGGTWGQPHGGGWGQPHGGGWGQPHGGGWGQPHGGGWGQ) form a 5 X 8 AA tandem repeats of P-H-G-G-G-W-G-Q region. A compositionally biased stretch (gly residues) spans 52-95 (QGGGTWGQPHGGGWGQPHGGGWGQPHGGGWGQPHGGGWGQGGGT). His61, Gly62, Gly63, His69, Gly70, Gly71, His77, Gly78, Gly79, His85, Gly86, and Gly87 together coordinate Cu(2+). Residues 90–231 (GQGGGTHNQW…SQAYYDGRRS (142 aa)) form a prP27-30 (protease resistant core) region. The cysteines at positions 179 and 214 are disulfide-linked. Residues Asn181 and Asn197 are each glycosylated (N-linked (GlcNAc...) asparagine). Ser231 carries the GPI-anchor amidated serine lipid modification. Residues 232-254 (SAVLFSSPPVILLISFLIFLIVG) constitute a propeptide, removed in mature form.

The protein belongs to the prion family. As to quaternary structure, monomer and homodimer. Has a tendency to aggregate into amyloid fibrils containing a cross-beta spine, formed by a steric zipper of superposed beta-strands. Soluble oligomers may represent an intermediate stage on the path to fibril formation. Copper binding may promote oligomerization. Interacts with GRB2, APP, ERI3/PRNPIP and SYN1. Mislocalized cytosolically exposed PrP interacts with MGRN1; this interaction alters MGRN1 subcellular location and causes lysosomal enlargement. Interacts with KIAA1191.

It localises to the cell membrane. The protein localises to the golgi apparatus. In terms of biological role, its primary physiological function is unclear. Has cytoprotective activity against internal or environmental stresses. May play a role in neuronal development and synaptic plasticity. May be required for neuronal myelin sheath maintenance. May play a role in iron uptake and iron homeostasis. Soluble oligomers are toxic to cultured neuroblastoma cells and induce apoptosis (in vitro). Association with GPC1 (via its heparan sulfate chains) targets PRNP to lipid rafts. Also provides Cu(2+) or Zn(2+) for the ascorbate-mediated GPC1 deaminase degradation of its heparan sulfate side chains. The polypeptide is Major prion protein (PRNP) (Cricetulus griseus (Chinese hamster)).